Reading from the N-terminus, the 170-residue chain is Peptide deformylase 1 (170 aa).

Cysteine 91 and histidine 133 together coordinate Fe cation. Glutamate 134 is a catalytic residue. Histidine 137 serves as a coordination point for Fe cation.

It belongs to the polypeptide deformylase family. Requires Fe(2+) as cofactor.

The catalysed reaction is N-terminal N-formyl-L-methionyl-[peptide] + H2O = N-terminal L-methionyl-[peptide] + formate. In terms of biological role, removes the formyl group from the N-terminal Met of newly synthesized proteins. Requires at least a dipeptide for an efficient rate of reaction. N-terminal L-methionine is a prerequisite for activity but the enzyme has broad specificity at other positions. The protein is Peptide deformylase 1 of Vibrio vulnificus (strain CMCP6).